Here is a 117-residue protein sequence, read N- to C-terminus: MAAYCQAQGLDVVLAALLGAINQQPSRQQFQQQQQQQRQPQLQQQQQQQGIQQQPQGLQHQQQQFGLTQQHGQGRRQNIVQPNPASQNNNRMMLDMLLLNQIAQSNRMNTLAFIMAN.

Low complexity predominate over residues arginine 27–glycine 72. The interval arginine 27 to asparagine 88 is disordered. Positions arginine 75 to glutamine 87 are enriched in polar residues.

In terms of tissue distribution, component of the acid-soluble and acid-insoluble organic matrix of calcified shell layers (at protein level).

Its subcellular location is the secreted. The sequence is that of Glutamine-rich protein from Haliotis asinina (Donkey's ear abalone).